Reading from the N-terminus, the 197-residue chain is Probable UbiX-like flavin prenyltransferase (197 aa).

FMN-binding positions include 9-11 (GAT), serine 36, 87-90 (SMKT), and arginine 122.

It belongs to the UbiX/PAD1 family. YclB subfamily. As to quaternary structure, homododecamer.

It catalyses the reaction dimethylallyl phosphate + FMNH2 = prenylated FMNH2 + phosphate. Involved in the non-oxidative decarboxylation and detoxification of phenolic derivatives under both aerobic and anaerobic conditions. Flavin prenyltransferase that catalyzes the synthesis of the prenylated FMN cofactor (prenyl-FMN) for phenolic acid decarboxylase. In Escherichia coli O157:H7, this protein is Probable UbiX-like flavin prenyltransferase.